Reading from the N-terminus, the 129-residue chain is MTIRKFHYLILFITIIAICSLFRIKDRVSTLNYQLRSVIKQINSENNNINILKAEQAYLLLPTRLEKLAAAYLKLEIVKSYQMINDPLAPNIEQNIKFNHNISISKSNKWRYKRIMNNKYIQTVSSRVK.

A helical membrane pass occupies residues 8-24 (YLILFITIIAICSLFRI).

It localises to the membrane. This is an uncharacterized protein from Rickettsia prowazekii (strain Madrid E).